Here is a 597-residue protein sequence, read N- to C-terminus: Arginine--tRNA ligase (597 aa).

Residues 125–135 (PNTNKPLHLGH) carry the 'HIGH' region motif.

Belongs to the class-I aminoacyl-tRNA synthetase family. Monomer.

Its subcellular location is the cytoplasm. It carries out the reaction tRNA(Arg) + L-arginine + ATP = L-arginyl-tRNA(Arg) + AMP + diphosphate. This is Arginine--tRNA ligase from Bacteroides thetaiotaomicron (strain ATCC 29148 / DSM 2079 / JCM 5827 / CCUG 10774 / NCTC 10582 / VPI-5482 / E50).